Reading from the N-terminus, the 693-residue chain is Elongation factor G (693 aa).

A tr-type G domain is found at 8-282; it reads EKTRNIGIMA…AVIDYLPSPL (275 aa). GTP-binding positions include 17-24, 81-85, and 135-138; these read AHVDAGKT, DTPGH, and NKMD.

The protein belongs to the TRAFAC class translation factor GTPase superfamily. Classic translation factor GTPase family. EF-G/EF-2 subfamily.

Its subcellular location is the cytoplasm. Catalyzes the GTP-dependent ribosomal translocation step during translation elongation. During this step, the ribosome changes from the pre-translocational (PRE) to the post-translocational (POST) state as the newly formed A-site-bound peptidyl-tRNA and P-site-bound deacylated tRNA move to the P and E sites, respectively. Catalyzes the coordinated movement of the two tRNA molecules, the mRNA and conformational changes in the ribosome. The protein is Elongation factor G of Streptococcus suis (strain 05ZYH33).